Here is a 115-residue protein sequence, read N- to C-terminus: NADH-ubiquinone oxidoreductase chain 3 (115 aa).

3 helical membrane-spanning segments follow: residues 3–23, 55–75, and 84–104; these read FVLI…ITFW, FFLV…LLPL, and LPLM…SLAY.

Belongs to the complex I subunit 3 family. As to quaternary structure, core subunit of respiratory chain NADH dehydrogenase (Complex I) which is composed of 45 different subunits. Interacts with TMEM186. Interacts with TMEM242.

The protein resides in the mitochondrion inner membrane. It catalyses the reaction a ubiquinone + NADH + 5 H(+)(in) = a ubiquinol + NAD(+) + 4 H(+)(out). Its function is as follows. Core subunit of the mitochondrial membrane respiratory chain NADH dehydrogenase (Complex I) which catalyzes electron transfer from NADH through the respiratory chain, using ubiquinone as an electron acceptor. Essential for the catalytic activity of complex I. This is NADH-ubiquinone oxidoreductase chain 3 from Pan troglodytes (Chimpanzee).